Reading from the N-terminus, the 439-residue chain is MKYSLPTTATAPFCPSAVSHSVAVPADASPLRKLALFVGPGLLVSVGYMDPGNWATAIEAGSRFGYALLFVVVLASFSGMLLQSLCSRLGIATGRDLAQLSRERYRPGVARGQWLLAELSIVATDLAEVLGAALAFHLLLGVSITTGVVLTAFDTLIVLALQGANFRRLEAIVLGLIATIGACFFVELVLIGPYWPDVAAGLRPSWDTLSSQEPLYLAIGILGATVMPHNLYLHSSVVQTRVSGDDAASKRSAIRFSRLDTIGSLSLALLVNAAILILAAAAFHGSGHTEVVEIQDAYHLLDPLVGGALASFLFGFALLAAGQSSTFTGTIAGQVVMEGFLRAKIPCWQRRLITRGLALVPALIGVLWLGEAAVGKLLVLSQVVLSLQLPFALWPLIRFSSDRGLMGEFVNPRWVSALAWSLFGLISAANLTLLYFWFG.

The next 9 helical transmembrane spans lie at 64–84 (FGYA…LLQS), 139–161 (LLGV…VLAL), 171–191 (AIVL…LVLI), 214–234 (PLYL…LYLH), 262–282 (IGSL…AAAA), 300–320 (LLDP…ALLA), 359–379 (LVPA…KLLV), 380–400 (LSQV…IRFS), and 418–438 (LAWS…YFWF).

This sequence belongs to the NRAMP family.

It is found in the cell inner membrane. Functionally, h(+)-stimulated, divalent metal cation uptake system. This Pseudomonas aeruginosa (strain ATCC 15692 / DSM 22644 / CIP 104116 / JCM 14847 / LMG 12228 / 1C / PRS 101 / PAO1) protein is Divalent metal cation transporter MntH 1.